The primary structure comprises 2074 residues: Cell adhesion molecule Dscam2 (2074 aa).

Positions methionine 1–serine 21 are cleaved as a signal peptide. The Extracellular segment spans residues glutamate 22 to asparagine 1619. Ig-like C2-type domains are found at residues proline 31 to serine 120, proline 238 to threonine 326, proline 330 to glutamine 417, proline 422 to asparagine 516, proline 521 to threonine 607, proline 612 to threonine 698, proline 707 to asparagine 802, and proline 805 to glutamine 902. Intrachain disulfides connect cysteine 53–cysteine 109, cysteine 259–cysteine 310, cysteine 352–cysteine 400, cysteine 444–cysteine 500, cysteine 541–cysteine 590, cysteine 633–cysteine 686, cysteine 728–cysteine 783, and cysteine 826–cysteine 884. 4 Fibronectin type-III domains span residues proline 907–glutamine 1003, proline 1008–aspartate 1108, proline 1113–aspartate 1211, and alanine 1215–isoleucine 1311. Residues proline 1312–glutamine 1400 form the Ig-like C2-type 9 domain. Cysteine 1334 and cysteine 1382 are oxidised to a cystine. Fibronectin type-III domains follow at residues proline 1402 to glutamine 1495 and serine 1496 to glycine 1595. A helical membrane pass occupies residues leucine 1620–valine 1640. The Cytoplasmic segment spans residues cysteine 1641–lysine 2074. 4 disordered regions span residues glutamate 1739–proline 1766, proline 1778–serine 1917, serine 1936–glutamine 1974, and proline 2011–lysine 2074. Residues threonine 1757 to proline 1766 are compositionally biased toward basic residues. The segment covering alanine 1831–lysine 1846 has biased composition (polar residues). Positions leucine 1848–histidine 1858 are enriched in basic residues. Polar residues predominate over residues glutamine 1859–threonine 1868. Low complexity-rich tracts occupy residues asparagine 1875–asparagine 1903, glutamine 1942–glutamine 1974, and serine 2036–proline 2051. The segment covering leucine 2055–phenylalanine 2066 has biased composition (polar residues).

It is found in the membrane. Its function is as follows. Cell adhesion molecule. The polypeptide is Cell adhesion molecule Dscam2 (Dscam2) (Drosophila melanogaster (Fruit fly)).